An 80-amino-acid polypeptide reads, in one-letter code: Calmodulin (80 aa).

EF-hand domains are found at residues 12–47 and 48–80; these read DSEE…LGEK and LTDE…MTSK. Ca(2+)-binding residues include aspartate 25, aspartate 27, asparagine 29, glutamate 36, aspartate 61, aspartate 63, aspartate 65, glutamine 67, and glutamate 72.

This sequence belongs to the calmodulin family.

Calmodulin mediates the control of a large number of enzymes, ion channels and other proteins by Ca(2+). Among the enzymes to be stimulated by the calmodulin-Ca(2+) complex are a number of protein kinases and phosphatases. In Strongylocentrotus purpuratus (Purple sea urchin), this protein is Calmodulin.